The following is a 191-amino-acid chain: CASP-like protein 1D1 (191 aa).

Residues 1 to 22 lie on the Cytoplasmic side of the membrane; the sequence is MTSTSKDTPESGYAVPPPNLFG. The chain crosses the membrane as a helical span at residues 23–43; it reads VDFGLRLLLLASAVSALVVLV. Topologically, residues 44–73 are extracellular; the sequence is TSKQTESIPTSLPPPFPAFISRDAKFQHSP. Residues 74-94 form a helical membrane-spanning segment; the sequence is AFIYLLVALSVTCFYSIITMV. Topologically, residues 95–118 are cytoplasmic; the sequence is ASFAAITSPSSSPRMLFHLVLSDA. The helical transmembrane segment at 119–139 threads the bilayer; sequence VMAGVMASAAGTAGSVAYLGL. Residues 140 to 160 lie on the Extracellular side of the membrane; that stretch reads KGNSHVNWNKVCNVYDKFCRH. Residues 161 to 181 traverse the membrane as a helical segment; that stretch reads VGSSAAVSLVASVLLVSLVVL. At 182–191 the chain is on the cytoplasmic side; sequence SSYSLYRRCR.

It belongs to the Casparian strip membrane proteins (CASP) family. Homodimer and heterodimers.

Its subcellular location is the cell membrane. This is CASP-like protein 1D1 from Musa acuminata (Banana).